The following is a 238-amino-acid chain: Probable transcriptional regulatory protein YeeN (238 aa).

It belongs to the TACO1 family. YeeN subfamily.

It is found in the cytoplasm. This Salmonella choleraesuis (strain SC-B67) protein is Probable transcriptional regulatory protein YeeN.